The sequence spans 122 residues: Replication factor A protein 3 (122 aa).

It belongs to the replication factor A protein 3 family. In terms of assembly, component of the heterotrimeric canonical replication protein A complex (RPA). The N-terminus is blocked.

The protein localises to the nucleus. As part of the replication protein A (RPA/RP-A), a single-stranded DNA-binding heterotrimeric complex, may play an essential role in DNA replication, recombination and repair. Binds and stabilizes single-stranded DNA intermediates, preventing complementary DNA reannealing and recruiting different proteins involved in DNA metabolism. Stimulates the activity of a cognate strand exchange protein (SEP1). The chain is Replication factor A protein 3 (RFA3) from Saccharomyces cerevisiae (strain ATCC 204508 / S288c) (Baker's yeast).